A 356-amino-acid chain; its full sequence is Glucose 1-dehydrogenase (356 aa).

The disordered stretch occupies residues 1–26 (MDAIVVSKADRTPRLVDRPRPDPTPG). Residues 8 to 21 (KADRTPRLVDRPRP) are compositionally biased toward basic and acidic residues. Position 38 (Asp38) interacts with Zn(2+). Thr40 lines the substrate pocket. The Zn(2+) site is built by His63 and Glu64. A disordered region spans residues 86–107 (TVRRPRGDPTPQFDRGQPDMAA). Positions 113 and 149 each coordinate substrate. Zn(2+) is bound at residue Glu149. Residues 180-183 (NGSL), 205-206 (RR), 270-272 (LGV), and 300-302 (SVN) each bind NADP(+). Asn302 provides a ligand contact to substrate.

The protein belongs to the zinc-containing alcohol dehydrogenase family. Glucose 1-dehydrogenase subfamily. Zn(2+) serves as cofactor.

It carries out the reaction D-glucose + NAD(+) = D-glucono-1,5-lactone + NADH + H(+). The enzyme catalyses D-glucose + NADP(+) = D-glucono-1,5-lactone + NADPH + H(+). Catalyzes the NAD(P)(+)-dependent oxidation of D-glucose to D-gluconate via gluconolactone. Can utilize both NAD(+) and NADP(+) as electron acceptor. Is involved in the degradation of glucose through a modified Entner-Doudoroff pathway. The polypeptide is Glucose 1-dehydrogenase (Halobacterium salinarum (strain ATCC 700922 / JCM 11081 / NRC-1) (Halobacterium halobium)).